The chain runs to 433 residues: UDP-N-acetylglucosamine 1-carboxyvinyltransferase 2 (433 aa).

Residue 23-24 participates in phosphoenolpyruvate binding; that stretch reads KN. UDP-N-acetyl-alpha-D-glucosamine is bound at residue arginine 96. Residue cysteine 120 is the Proton donor of the active site. Cysteine 120 carries the post-translational modification 2-(S-cysteinyl)pyruvic acid O-phosphothioketal. Residues 125-129, aspartate 308, and valine 330 contribute to the UDP-N-acetyl-alpha-D-glucosamine site; that span reads RPIDL.

The protein belongs to the EPSP synthase family. MurA subfamily.

It localises to the cytoplasm. It catalyses the reaction phosphoenolpyruvate + UDP-N-acetyl-alpha-D-glucosamine = UDP-N-acetyl-3-O-(1-carboxyvinyl)-alpha-D-glucosamine + phosphate. Its pathway is cell wall biogenesis; peptidoglycan biosynthesis. Its function is as follows. Cell wall formation. Adds enolpyruvyl to UDP-N-acetylglucosamine. The chain is UDP-N-acetylglucosamine 1-carboxyvinyltransferase 2 from Enterococcus faecalis (strain ATCC 700802 / V583).